A 63-amino-acid chain; its full sequence is uncharacterized protein (63 aa).

The chain crosses the membrane as a helical span at residues 20-40; that stretch reads IVLLISFIFFFGRFIYSSVGA.

It localises to the membrane. This is an uncharacterized protein from Escherichia coli O157:H7.